We begin with the raw amino-acid sequence, 260 residues long: MDRHSSYIFIWLQLELCAMAVLLTKGEIRCYCDAAHCVATGYMCKSELSACFSRLLDPQNTNSPLTHGCLDSLASTADICRAKQAQNHSGPTMPTLECCHEDMCNYRGLHDVLSPPKSEASGQGNRYQHDSSRNLITKVQELTSSKELWFRAAVIAVPIAGGLILVLLIMLALRMLRSENKRLQDQRQQMLSRLHYSFHGHHSKKGQVAKLDLECMVPVSGQENCCLTCDKMRQADLSNEKILSLVHWGMYSGHGKLEFV.

An N-terminal signal peptide occupies residues 1–26 (MDRHSSYIFIWLQLELCAMAVLLTKG). Topologically, residues 27–152 (EIRCYCDAAH…TSSKELWFRA (126 aa)) are extracellular. Residue Asn-87 is glycosylated (N-linked (GlcNAc...) asparagine). Residues 153-173 (AVIAVPIAGGLILVLLIMLAL) form a helical membrane-spanning segment. Residues 174–260 (RMLRSENKRL…YSGHGKLEFV (87 aa)) lie on the Cytoplasmic side of the membrane.

This sequence belongs to the BAMBI family. As to expression, detected in granulosa and thecal cells of adult ovaries and in spermatogonia, spermatocytes, round spermatids, and Sertoli cells of adult testes.

The protein resides in the membrane. In terms of biological role, negatively regulates TGF-beta signaling. The sequence is that of BMP and activin membrane-bound inhibitor homolog (Bambi) from Rattus norvegicus (Rat).